Here is a 463-residue protein sequence, read N- to C-terminus: D(5)-like dopamine receptor (463 aa).

Over 1–39 the chain is Extracellular; it reads MENFYNETEPTEPRGGVDPLRVVTAAEDVPAPVGGVSVR. A glycan (N-linked (GlcNAc...) asparagine) is linked at N6. A helical transmembrane segment spans residues 40–65; it reads ALTGCVLCALIVSTLLGNTLVCAAVI. At 66–76 the chain is on the cytoplasmic side; that stretch reads KFRHLRSKVTN. Residues 77–103 traverse the membrane as a helical segment; that stretch reads AFVVSLAVSDLFVAVLVMPWRAVSEVA. The Extracellular segment spans residues 104–112; that stretch reads GVWLFGRFC. Residues C112 and C194 are joined by a disulfide bond. The chain crosses the membrane as a helical span at residues 113-135; that stretch reads DTWVAFDIMCSTASILNLCVISM. Residues 136–154 are Cytoplasmic-facing; that stretch reads DRYWAISNPFRYERRMTRR. The chain crosses the membrane as a helical span at residues 155 to 180; it reads FAFLMIAVAWTLSVLISFIPVQLNWH. Topologically, residues 181 to 198 are extracellular; the sequence is RADNNSSAHEQGDCNASL. Residues 199–223 form a helical membrane-spanning segment; it reads NRTYAISSSLISFYIPVLIMVGTYT. Residues 224–273 lie on the Cytoplasmic side of the membrane; it reads RIFRIAQTQIRRISSLERAAGQRAQNQSHRASTHDESALKTSFKRETKVL. A helical membrane pass occupies residues 274 to 301; that stretch reads KTLSVIMGVFVFCWLPFFVLNCVVPFCD. Over 302–315 the chain is Extracellular; the sequence is VDKVGEPPCVSDTT. The chain crosses the membrane as a helical span at residues 316-337; that stretch reads FNIFVWFGWANSSLNPVIYAFN. At 338–463 the chain is on the cytoplasmic side; that stretch reads ADFRKAFTTI…PGQIQDLGDL (126 aa).

This sequence belongs to the G-protein coupled receptor 1 family.

It localises to the cell membrane. In terms of biological role, receptor for dopamine. The protein is D(5)-like dopamine receptor (dl) of Takifugu rubripes (Japanese pufferfish).